We begin with the raw amino-acid sequence, 309 residues long: Caspase-7 (309 aa).

Positions 1–24 are cleaved as a propeptide — N-terminally processed; it reads MSGDQHADRSSGEKSNGDQDDTVD. Over residues 1-31 the composition is skewed to basic and acidic residues; sequence MSGDQHADRSSGEKSNGDQDDTVDAKPDRSS. Positions 1–53 are disordered; it reads MSGDQHADRSSGEKSNGDQDDTVDAKPDRSSRLSLFAKKKKNGEEEQPKSSLS. The exosite stretch occupies residues 39–42; sequence KKKN. The loop L1 stretch occupies residues 81–92; the sequence is KNFEDKTGMGTR. Active-site residues include H149 and C191. The tract at residues 192–201 is loop L2; that stretch reads RGSEFDEGIQ. Residues 204-214 constitute a propeptide that is removed on maturation; sequence SGPANDTLETD. Positions 234–246 are loop L3; that stretch reads VPGYYSWRNPGRG. Residues 282-296 are loop L4; it reads ESQSDDPRFSEKKQI.

Belongs to the peptidase C14A family. As to quaternary structure, heterotetramer that consists of two anti-parallel arranged heterodimers, each one formed by a 20 kDa (p20) and a 11 kDa (p11) subunit. In terms of processing, cleavage by different proteases, such as granzyme B (GZMB), caspase-1 (CASP1), caspase-8 (CASP8) or caspase-9 (CASP9) generate the two active subunits. Its involvement in different programmed cell death processes is probably specified by the protease that activates CASP7. Cleaved and activated by initiator caspases (CASP8 and/or CASP9), leading to execution phase of apoptosis. Cleavage and maturation by GZMB regulates granzyme-mediated programmed cell death. Cleaved and activated by CASP1 in response to bacterial infection.

Its subcellular location is the cytoplasm. It is found in the cytosol. It localises to the nucleus. The protein resides in the secreted. The protein localises to the extracellular space. The enzyme catalyses Strict requirement for an Asp residue at position P1 and has a preferred cleavage sequence of Asp-Glu-Val-Asp-|-.. During activation, the N-terminal disordered prodomain is removed by cleavage. Concomitantly, double cleavage gives rise to a large Caspase-7 subunit p20 and a small Caspase-7 subunit p11. The two large and two small subunits then assemble to form the active CASP7 complex. Can be cleaved and activated by different caspases, depending on the context. Cleaved and activated by initiator caspases (CASP8 and/or CASP9), leading to execution phase of apoptosis. Cleavage and maturation by GZMB regulates granzyme-mediated programmed cell death. Cleavage and maturation by CASP1 regulates pyroptosis. Inhibited by BIRC6; following inhibition of BIRC6-caspase binding by DIABLO/SMAC, BIRC6 is subjected to caspase cleavage, leading to an increase in active caspases. Its function is as follows. Thiol protease involved in different programmed cell death processes, such as apoptosis, pyroptosis or granzyme-mediated programmed cell death, by proteolytically cleaving target proteins. Has a marked preference for Asp-Glu-Val-Asp (DEVD) consensus sequences, with some plasticity for alternate non-canonical sequences. Its involvement in the different programmed cell death processes is probably determined by upstream proteases that activate CASP7. Acts as an effector caspase involved in the execution phase of apoptosis: following cleavage and activation by initiator caspases (CASP8 and/or CASP9), mediates execution of apoptosis by catalyzing cleavage of proteins. Compared to CASP3, acts as a minor executioner caspase and cleaves a limited set of target proteins. Acts as a key regulator of the inflammatory response in response to bacterial infection by catalyzing cleavage and activation of the sphingomyelin phosphodiesterase SMPD1 in the extracellular milieu, thereby promoting membrane repair. Cleaves BIRC6 following inhibition of BIRC6-caspase binding by DIABLO/SMAC. This is Caspase-7 from Gallus gallus (Chicken).